The primary structure comprises 141 residues: Large ribosomal subunit protein uL11 (141 aa).

Belongs to the universal ribosomal protein uL11 family. In terms of assembly, part of the ribosomal stalk of the 50S ribosomal subunit. Interacts with L10 and the large rRNA to form the base of the stalk. L10 forms an elongated spine to which L12 dimers bind in a sequential fashion forming a multimeric L10(L12)X complex. One or more lysine residues are methylated.

Functionally, forms part of the ribosomal stalk which helps the ribosome interact with GTP-bound translation factors. The protein is Large ribosomal subunit protein uL11 of Fusobacterium nucleatum subsp. nucleatum (strain ATCC 25586 / DSM 15643 / BCRC 10681 / CIP 101130 / JCM 8532 / KCTC 2640 / LMG 13131 / VPI 4355).